The following is a 117-amino-acid chain: Immunoglobulin kappa variable 1D-16 (117 aa).

Residues 1–22 form the signal peptide; that stretch reads MDMRVLAQLLGLLLLCFPGARC. Residues 23 to 45 are framework-1; it reads DIQMTQSPSSLSASVGDRVTITC. The region spanning 24 to 117 is the Ig-like domain; it reads IQMTQSPSSL…YYCQQYNSYP (94 aa). Cysteine 45 and cysteine 110 are disulfide-bonded. The segment at 46-56 is complementarity-determining-1; it reads RASQGISSWLA. A framework-2 region spans residues 57–71; sequence WYQQKPEKAPKSLIY. A complementarity-determining-2 region spans residues 72 to 78; it reads AASSLQS. The tract at residues 79 to 110 is framework-3; it reads GVPSRFSGSGSGTDFTLTISSLQPEDFATYYC. The segment at 111–117 is complementarity-determining-3; it reads QQYNSYP.

As to quaternary structure, immunoglobulins are composed of two identical heavy chains and two identical light chains; disulfide-linked.

It is found in the secreted. The protein localises to the cell membrane. In terms of biological role, v region of the variable domain of immunoglobulin light chains that participates in the antigen recognition. Immunoglobulins, also known as antibodies, are membrane-bound or secreted glycoproteins produced by B lymphocytes. In the recognition phase of humoral immunity, the membrane-bound immunoglobulins serve as receptors which, upon binding of a specific antigen, trigger the clonal expansion and differentiation of B lymphocytes into immunoglobulins-secreting plasma cells. Secreted immunoglobulins mediate the effector phase of humoral immunity, which results in the elimination of bound antigens. The antigen binding site is formed by the variable domain of one heavy chain, together with that of its associated light chain. Thus, each immunoglobulin has two antigen binding sites with remarkable affinity for a particular antigen. The variable domains are assembled by a process called V-(D)-J rearrangement and can then be subjected to somatic hypermutations which, after exposure to antigen and selection, allow affinity maturation for a particular antigen. This is Immunoglobulin kappa variable 1D-16 from Homo sapiens (Human).